Reading from the N-terminus, the 219-residue chain is 3,4-dihydroxy-2-butanone 4-phosphate synthase (219 aa).

Residues 37–38, Asp-42, 150–154, and Glu-174 contribute to the D-ribulose 5-phosphate site; these read RE and RRGHT. A Mg(2+)-binding site is contributed by Glu-38. His-153 contributes to the Mg(2+) binding site.

The protein belongs to the DHBP synthase family. Homodimer. The cofactor is Mg(2+). It depends on Mn(2+) as a cofactor.

The catalysed reaction is D-ribulose 5-phosphate = (2S)-2-hydroxy-3-oxobutyl phosphate + formate + H(+). The protein operates within cofactor biosynthesis; riboflavin biosynthesis; 2-hydroxy-3-oxobutyl phosphate from D-ribulose 5-phosphate: step 1/1. Its function is as follows. Catalyzes the conversion of D-ribulose 5-phosphate to formate and 3,4-dihydroxy-2-butanone 4-phosphate. In Edwardsiella ictaluri (strain 93-146), this protein is 3,4-dihydroxy-2-butanone 4-phosphate synthase.